The chain runs to 113 residues: Nitrogenase-stabilizing/protective protein NifW (113 aa).

It belongs to the NifW family. As to quaternary structure, homotrimer; associates with NifD.

May protect the nitrogenase Fe-Mo protein from oxidative damage. This Polaromonas naphthalenivorans (strain CJ2) protein is Nitrogenase-stabilizing/protective protein NifW.